Reading from the N-terminus, the 24-residue chain is ATIEVYNILPYYYYVSKAWSWNGN.

The protein localises to the secreted. It localises to the cell wall. In Nicotiana tabacum (Common tobacco), this protein is 47 kDa cell wall protein.